We begin with the raw amino-acid sequence, 324 residues long: MSQSFNRHRRLRTSKAMREMVKETRLHPSDFIYPIFVVEGLEGKKAVPSMPDVHHVSLDLLKDEVAELVKLGIQSVIVFGIPEEKDDCGTQAYHDHGIVQKAITEIKEHFPEMVVVADTCLCEYTDHGHCGLVKDGVILNDESLELLAQTAVSQAKAGADIIAPSNMMDGFVTVIREALDKEGFVNIPIMSYAVKYSSEFYGPFRDAANSTPQFGDRKTYQMDPANRMEALREAQSDVEEGADFLIVKPSLSYMDIMRDVKNEFTLPLVAYNVSGEYSMVKAAAQNGWIKEKEIVLEILTSMKRAGADLIITYHAKDAAKWLAE.

Zn(2+)-binding residues include cysteine 120, cysteine 122, and cysteine 130. Lysine 195 (schiff-base intermediate with substrate) is an active-site residue. 5-aminolevulinate-binding residues include arginine 205 and arginine 217. Glutamate 233 provides a ligand contact to Mg(2+). The active-site Schiff-base intermediate with substrate is the lysine 248. 5-aminolevulinate-binding residues include serine 274 and tyrosine 313.

It belongs to the ALAD family. In terms of assembly, homooctamer. The cofactor is Zn(2+).

The enzyme catalyses 2 5-aminolevulinate = porphobilinogen + 2 H2O + H(+). It functions in the pathway porphyrin-containing compound metabolism; protoporphyrin-IX biosynthesis; coproporphyrinogen-III from 5-aminolevulinate: step 1/4. Catalyzes an early step in the biosynthesis of tetrapyrroles. Binds two molecules of 5-aminolevulinate per subunit, each at a distinct site, and catalyzes their condensation to form porphobilinogen. The polypeptide is Delta-aminolevulinic acid dehydratase (hemB) (Bacillus subtilis (strain 168)).